The following is a 243-amino-acid chain: Putative ABC transporter arginine-binding protein 2 (243 aa).

A signal peptide spans 1–19 (MKKVLIAALIAGFSLSATA).

The protein belongs to the bacterial solute-binding protein 3 family. The complex is composed of two ATP-binding proteins (ArtP), two transmembrane proteins (ArtM and ArtQ) and two solute-binding proteins (ArtJ and ArtI).

The protein resides in the periplasm. Part of the ABC transporter complex ArtPIQMJ involved in arginine transport. The sequence is that of Putative ABC transporter arginine-binding protein 2 (artI) from Escherichia coli (strain K12).